Here is a 224-residue protein sequence, read N- to C-terminus: Large ribosomal subunit protein bL25 (224 aa).

Positions 196–224 are disordered; it reads VEEVDTDAEEVDAADVPATEQGSEEDKGE. Over residues 197-208 the composition is skewed to acidic residues; the sequence is EEVDTDAEEVDA.

This sequence belongs to the bacterial ribosomal protein bL25 family. CTC subfamily. As to quaternary structure, part of the 50S ribosomal subunit; part of the 5S rRNA/L5/L18/L25 subcomplex. Contacts the 5S rRNA. Binds to the 5S rRNA independently of L5 and L18.

This is one of the proteins that binds to the 5S RNA in the ribosome where it forms part of the central protuberance. This is Large ribosomal subunit protein bL25 from Psychrobacter sp. (strain PRwf-1).